Reading from the N-terminus, the 61-residue chain is Sec-independent protein translocase protein TatA (61 aa).

Residues 1–21 (MFGIGMPEMLIILVIILIIFG) traverse the membrane as a helical segment.

It belongs to the TatA/E family. In terms of assembly, the Tat system comprises two distinct complexes: a TatABC complex, containing multiple copies of TatA, TatB and TatC subunits, and a separate TatA complex, containing only TatA subunits. Substrates initially bind to the TatABC complex, which probably triggers association of the separate TatA complex to form the active translocon.

Its subcellular location is the cell inner membrane. Part of the twin-arginine translocation (Tat) system that transports large folded proteins containing a characteristic twin-arginine motif in their signal peptide across membranes. TatA could form the protein-conducting channel of the Tat system. The polypeptide is Sec-independent protein translocase protein TatA (Syntrophus aciditrophicus (strain SB)).